Here is a 97-residue protein sequence, read N- to C-terminus: Co-chaperonin GroES (97 aa).

This sequence belongs to the GroES chaperonin family. Heptamer of 7 subunits arranged in a ring. Interacts with the chaperonin GroEL.

The protein resides in the cytoplasm. Functionally, together with the chaperonin GroEL, plays an essential role in assisting protein folding. The GroEL-GroES system forms a nano-cage that allows encapsulation of the non-native substrate proteins and provides a physical environment optimized to promote and accelerate protein folding. GroES binds to the apical surface of the GroEL ring, thereby capping the opening of the GroEL channel. The chain is Co-chaperonin GroES from Azotobacter vinelandii (strain DJ / ATCC BAA-1303).